The chain runs to 84 residues: Putative membrane protein insertion efficiency factor (84 aa).

This sequence belongs to the UPF0161 family.

The protein resides in the cell inner membrane. In terms of biological role, could be involved in insertion of integral membrane proteins into the membrane. The protein is Putative membrane protein insertion efficiency factor of Shewanella pealeana (strain ATCC 700345 / ANG-SQ1).